Consider the following 128-residue polypeptide: uncharacterized protein (128 aa).

Transmembrane regions (helical) follow at residues 45 to 65 and 95 to 115; these read GYFH…LFPF and FMSH…LSCF.

Its subcellular location is the membrane. This is an uncharacterized protein from Saccharomyces cerevisiae (strain ATCC 204508 / S288c) (Baker's yeast).